The following is a 184-amino-acid chain: Large ribosomal subunit protein eL13 (184 aa).

Positions Pro28–Pro53 are disordered. Basic residues predominate over residues Lys31 to Ala42.

The protein belongs to the eukaryotic ribosomal protein eL13 family.

The sequence is that of Large ribosomal subunit protein eL13 (RPL13) from Schistosoma mansoni (Blood fluke).